Reading from the N-terminus, the 318-residue chain is Protein RecA (318 aa).

53 to 60 (GPESSGKT) serves as a coordination point for ATP.

This sequence belongs to the RecA family.

Its subcellular location is the cytoplasm. Functionally, can catalyze the hydrolysis of ATP in the presence of single-stranded DNA, the ATP-dependent uptake of single-stranded DNA by duplex DNA, and the ATP-dependent hybridization of homologous single-stranded DNAs. It interacts with LexA causing its activation and leading to its autocatalytic cleavage. This is Protein RecA from Bacteroides fragilis (strain YCH46).